The following is a 377-amino-acid chain: Prostaglandin reductase-3 (377 aa).

Position 35 is an N6-acetyllysine (K35). Residues T185, S205, K209, Y224, S247, I269, and Y275 each coordinate NADP(+). At S299 the chain carries Phosphoserine. Residues 303 to 305 (FFL) and N361 each bind NADP(+).

This sequence belongs to the zinc-containing alcohol dehydrogenase family. Quinone oxidoreductase subfamily. In terms of tissue distribution, widely expressed.

The protein localises to the peroxisome. It catalyses the reaction 13,14-dihydro-15-oxo-prostaglandin E2 + NADP(+) = 15-oxoprostaglandin E2 + NADPH + H(+). It carries out the reaction 13,14-dihydro-15-oxo-prostaglandin E1 + NADP(+) = 15-oxoprostaglandin E1 + NADPH + H(+). The enzyme catalyses 13,14-dihydro-15-oxo-PGF2alpha + NADP(+) = 15-oxoprostaglandin F2alpha + NADPH + H(+). The catalysed reaction is 13,14-dihydro-15-oxo-prostaglandin F1alpha + NADP(+) = 15-oxoprostaglandin F1alpha + NADPH + H(+). Functionally, functions as 15-oxo-prostaglandin 13-reductase and acts on 15-keto-PGE1, 15-keto-PGE2, 15-keto-PGE1-alpha and 15-keto-PGE2-alpha with highest efficiency towards 15-keto-PGE2-alpha. Overexpression represses transcriptional activity of PPARG and inhibits adipocyte differentiation. The protein is Prostaglandin reductase-3 of Mus musculus (Mouse).